The chain runs to 194 residues: Small ribosomal subunit protein uS5 (194 aa).

Residues 26 to 89 (LEEKVVEIRR…ADAKKRIIKV (64 aa)) enclose the S5 DRBM domain.

It belongs to the universal ribosomal protein uS5 family. Part of the 30S ribosomal subunit. Contacts proteins S4 and S8.

With S4 and S12 plays an important role in translational accuracy. In terms of biological role, located at the back of the 30S subunit body where it stabilizes the conformation of the head with respect to the body. In Sulfurihydrogenibium sp. (strain YO3AOP1), this protein is Small ribosomal subunit protein uS5.